The chain runs to 712 residues: Probable metal-nicotianamine transporter YSL11 (712 aa).

The interval 25–48 is disordered; it reads RRNTTAAARGNAGEEEEEAEAVAP. 14 helical membrane-spanning segments follow: residues 70–90, 93–113, 138–158, 180–200, 242–262, 300–320, 345–365, 418–438, 446–466, 478–498, 532–552, 593–613, 631–651, and 666–686; these read AFVVGFLLSIMFNIIVMKLSL, GVIPSLNVSASLLGFFLVRLW, CVVSAYGVAFSGGFGSYLFGM, LGWIIGFMFLVSFVGLFALVP, LGKYFSISFLWAFFQWFYTAG, IVNVSLLIGGIISWGIMWPLI, VFITIAVILGDGLYNFVKVFG, VAIGGYVVLAVITSGCLPLII, ILIAYIFAPIMAFCNAYGSGL, LAIFVFGAWAGASHGGVLVGL, FVSQVIGTAMGCVIAPCVFWL, LTLCYIAFVAAFIINLIKDLV, FYLGPYFAIDMFMGSVILYFW, and VASGLMCGDGLWALPQAVLSL.

It belongs to the YSL (TC 2.A.67.2) family.

The protein localises to the membrane. In terms of biological role, may be involved in the transport of nicotianamine-chelated metals. This is Probable metal-nicotianamine transporter YSL11 (YSL11) from Oryza sativa subsp. japonica (Rice).